The chain runs to 420 residues: Glutamyl-tRNA reductase (420 aa).

Substrate is bound by residues 49–52 (TCNR), serine 107, 112–114 (EPQ), and glutamine 118. The active-site Nucleophile is the cysteine 50. An NADP(+)-binding site is contributed by 187 to 192 (GAGETI).

Belongs to the glutamyl-tRNA reductase family. As to quaternary structure, homodimer.

The enzyme catalyses (S)-4-amino-5-oxopentanoate + tRNA(Glu) + NADP(+) = L-glutamyl-tRNA(Glu) + NADPH + H(+). Its pathway is porphyrin-containing compound metabolism; protoporphyrin-IX biosynthesis; 5-aminolevulinate from L-glutamyl-tRNA(Glu): step 1/2. In terms of biological role, catalyzes the NADPH-dependent reduction of glutamyl-tRNA(Glu) to glutamate 1-semialdehyde (GSA). The polypeptide is Glutamyl-tRNA reductase (Methylococcus capsulatus (strain ATCC 33009 / NCIMB 11132 / Bath)).